We begin with the raw amino-acid sequence, 377 residues long: Cilia- and flagella-associated protein 263 (377 aa).

Coiled coils occupy residues 95 to 139 (LTVE…ADIR) and 169 to 355 (QKVM…LKGY).

This sequence belongs to the CFAP263 family. Forms a complex with CFAP184; the interaction is required for functional activity in cilia. Interacts with HAP1 and PCM1.

It localises to the cytoplasm. It is found in the cytoskeleton. The protein resides in the microtubule organizing center. The protein localises to the centrosome. Its subcellular location is the centriolar satellite. It localises to the cell projection. It is found in the cilium. Its function is as follows. Component of centriolar satellites contributing to primary cilium formation. In complex with CFAP263, acts as a regulator of ciliary beating that connects radial spoke 3 (RS3) to the inner dynein arm (IDA) and the nexin-dynein regulatory complex (N-DRC). The complex is positioned parallel to N-DRC and forms a connection between the arch at the base of RS3, the IDA tail and N-DRC. The polypeptide is Cilia- and flagella-associated protein 263 (Cfap263) (Mus musculus (Mouse)).